Reading from the N-terminus, the 683-residue chain is DNA ligase (683 aa).

Residues 29–33, 79–80, and E109 contribute to the NAD(+) site; these read DAEFD and SL. The N6-AMP-lysine intermediate role is filled by K111. Positions 132, 172, 288, and 312 each coordinate NAD(+). The Zn(2+) site is built by C406, C409, C425, and C431. The region spanning 595–683 is the BRCT domain; that stretch reads SVPRTLAGVT…GPPAEAGEPT (89 aa).

It belongs to the NAD-dependent DNA ligase family. LigA subfamily. Requires Mg(2+) as cofactor. Mn(2+) serves as cofactor.

The enzyme catalyses NAD(+) + (deoxyribonucleotide)n-3'-hydroxyl + 5'-phospho-(deoxyribonucleotide)m = (deoxyribonucleotide)n+m + AMP + beta-nicotinamide D-nucleotide.. Its function is as follows. DNA ligase that catalyzes the formation of phosphodiester linkages between 5'-phosphoryl and 3'-hydroxyl groups in double-stranded DNA using NAD as a coenzyme and as the energy source for the reaction. It is essential for DNA replication and repair of damaged DNA. This Mycobacterium ulcerans (strain Agy99) protein is DNA ligase.